A 203-amino-acid polypeptide reads, in one-letter code: Holliday junction branch migration complex subunit RuvA (203 aa).

The tract at residues 1 to 63 (MIDYLRGTLT…EDVIRLYGFR (63 aa)) is domain I. The interval 64–142 (TKEKRSLFEK…ELHPGLFSQK (79 aa)) is domain II. Residues 143 to 152 (EEQPKPHEKN) are flexible linker. The segment at 153 to 203 (DGNQALDEAMEALKALGYVEKELKKVKPKLEQETLTTDAYIKKALQLMLNR) is domain III.

The protein belongs to the RuvA family. As to quaternary structure, homotetramer. Forms an RuvA(8)-RuvB(12)-Holliday junction (HJ) complex. HJ DNA is sandwiched between 2 RuvA tetramers; dsDNA enters through RuvA and exits via RuvB. An RuvB hexamer assembles on each DNA strand where it exits the tetramer. Each RuvB hexamer is contacted by two RuvA subunits (via domain III) on 2 adjacent RuvB subunits; this complex drives branch migration. In the full resolvosome a probable DNA-RuvA(4)-RuvB(12)-RuvC(2) complex forms which resolves the HJ.

It localises to the cytoplasm. Functionally, the RuvA-RuvB-RuvC complex processes Holliday junction (HJ) DNA during genetic recombination and DNA repair, while the RuvA-RuvB complex plays an important role in the rescue of blocked DNA replication forks via replication fork reversal (RFR). RuvA specifically binds to HJ cruciform DNA, conferring on it an open structure. The RuvB hexamer acts as an ATP-dependent pump, pulling dsDNA into and through the RuvAB complex. HJ branch migration allows RuvC to scan DNA until it finds its consensus sequence, where it cleaves and resolves the cruciform DNA. The protein is Holliday junction branch migration complex subunit RuvA of Halalkalibacterium halodurans (strain ATCC BAA-125 / DSM 18197 / FERM 7344 / JCM 9153 / C-125) (Bacillus halodurans).